Here is a 454-residue protein sequence, read N- to C-terminus: tRNA modification GTPase MnmE (454 aa).

(6S)-5-formyl-5,6,7,8-tetrahydrofolate-binding residues include arginine 23, glutamate 80, and lysine 120. Positions 216–377 (GMKVVIAGRP…LRNHLKQSMG (162 aa)) constitute a TrmE-type G domain. Asparagine 226 serves as a coordination point for K(+). GTP-binding positions include 226 to 231 (NAGKSS), 245 to 251 (TDIAGTT), 270 to 273 (DTAG), 335 to 338 (NKAD), and 358 to 360 (SAR). Position 230 (serine 230) interacts with Mg(2+). Residues threonine 245, isoleucine 247, and threonine 250 each coordinate K(+). Position 251 (threonine 251) interacts with Mg(2+). Lysine 454 provides a ligand contact to (6S)-5-formyl-5,6,7,8-tetrahydrofolate.

It belongs to the TRAFAC class TrmE-Era-EngA-EngB-Septin-like GTPase superfamily. TrmE GTPase family. Homodimer. Heterotetramer of two MnmE and two MnmG subunits. It depends on K(+) as a cofactor.

It is found in the cytoplasm. Its function is as follows. Exhibits a very high intrinsic GTPase hydrolysis rate. Involved in the addition of a carboxymethylaminomethyl (cmnm) group at the wobble position (U34) of certain tRNAs, forming tRNA-cmnm(5)s(2)U34. The polypeptide is tRNA modification GTPase MnmE (Escherichia coli O6:K15:H31 (strain 536 / UPEC)).